The sequence spans 138 residues: MGDKTKVQVSKLKPGRYIIIDDEPCRIVNITVSSPGKHGSAKARIEAVGIFDGKVRSIVKPTSAEVDVPIIDKKTAQVIAITPDTVQIMDMETYETFEVPIDTGVADEIRDQLKEGINVEYWETLGRIKIMRIKGEGE.

Residue lysine 37 is modified to Hypusine.

Belongs to the eIF-5A family.

It is found in the cytoplasm. Functions by promoting the formation of the first peptide bond. The sequence is that of Translation initiation factor 5A (eif5a) from Pyrococcus horikoshii (strain ATCC 700860 / DSM 12428 / JCM 9974 / NBRC 100139 / OT-3).